The sequence spans 179 residues: HTH-type transcriptional regulator AldR (179 aa).

Residues 32–93 enclose the HTH asnC-type domain; the sequence is LDEVDRRILS…DIDPVAVGLP (62 aa). Positions 51-70 form a DNA-binding region, H-T-H motif; it reads NNALADTVGIAPSTCHGRVR.

Homooctamer. Homotetramer. Tetramer of dimers. The N-terminal DNA-binding domains are swapped, forming a dimer, and four dimers are assembled into an octamer through crystal symmetry.

The DNA-binding activity of AldR is modulated by interaction of AldR with various amino acids. Alanine, tryptophan, tyrosine and aspartate completely abolish the DNA binding ability of AldR. On the other hand, glutamate and asparagine reduce AldR binding to DNA but do not completely abolish it. Binding of amino acids can lead to structural modifications and changes in oligomeric association. Activity is also inhibited by 3 small molecule inhibitors, tetrahydroquinoline carbonitrile derivative (S010-0261), levothyroxine and liothyronine, which can disrupt the AldR-DNA complex. Functionally, transcriptional regulator that might play a role under hypoxic conditions. Regulates the expression of ald, which encodes L-alanine dehydrogenase. Serves as both an activator for ald expression in the presence of L-alanine and a repressor in the absence of L-alanine. Acts by binding directly to the upstream region of the ald gene. Four AldR-binding sites (O2, O1, O4 and O3) were identified upstream of the ald gene. O2, O1 and O4 are required for the induction of ald expression by alanine, while O3 is directly involved in the repression of ald expression, by occluding the access of RNA polymerase to the ald promoter. In addition to O3, both O1 and O4 are also necessary for full repression of ald expression in the absence of alanine. The polypeptide is HTH-type transcriptional regulator AldR (Mycobacterium tuberculosis (strain ATCC 25618 / H37Rv)).